The primary structure comprises 457 residues: Cysteine--tRNA ligase (457 aa).

Cys-28 is a Zn(2+) binding site. A 'HIGH' region motif is present at residues 30-40 (MTVYDYCHLGH). Zn(2+)-binding residues include Cys-209, His-234, and Glu-238. The 'KMSKS' region motif lies at 266–270 (KMSKS). Lys-269 lines the ATP pocket.

This sequence belongs to the class-I aminoacyl-tRNA synthetase family. Monomer. Zn(2+) serves as cofactor.

It localises to the cytoplasm. The enzyme catalyses tRNA(Cys) + L-cysteine + ATP = L-cysteinyl-tRNA(Cys) + AMP + diphosphate. The chain is Cysteine--tRNA ligase from Laribacter hongkongensis (strain HLHK9).